The chain runs to 985 residues: Rho guanine nucleotide exchange factor 2 (985 aa).

The interval 1–32 (MSRIESLTRARIDRSKEQATKTREKEKMKEAK) is disordered. The Phorbol-ester/DAG-type zinc finger occupies 39 to 86 (GHLFTTISVSGMTMCYACNKSITAKEALICPTCNVTIHNRCKDTLANC). Phosphoserine occurs at positions 109, 122, 129, 133, and 137. The interval 131–161 (RQSLLGSRRGLSSLSLAKSVSTTNIAGHFND) is interaction with DYNLT1. Phosphoserine; by PAK4 is present on serine 143. 5 positions are modified to phosphoserine: serine 151, serine 163, serine 172, serine 174, and serine 177. Residues 236–433 (KKQDVIYELI…KELLSNVDQD (198 aa)) form the DH domain. Lysine 354 carries the post-translational modification N6-acetyllysine. In terms of domain architecture, PH spans 473–572 (KLIHDGCLLW…WIRVIQQSVR (100 aa)). The stretch at 591–615 (LRRIKTKLQQKNQALVELLQMNVEL) forms a coiled coil. Phosphoserine occurs at positions 646 and 649. Threonine 680 is subject to Phosphothreonine; by MAPK1 or MAPK3. Serine 692, serine 710, and serine 781 each carry phosphoserine. The residue at position 795 (threonine 795) is a Phosphothreonine. Residues 797-866 (EKQATELALL…RQLAALGQNE (70 aa)) are a coiled coil. Position 885 is a phosphoserine (serine 885). Disordered stretches follow at residues 890–909 (DALY…DRLD) and 918–985 (HRPF…ASES). At tyrosine 893 the chain carries Phosphotyrosine. Phosphoserine; by PAK4 is present on serine 895. Residues 919-938 (RPFDDREAQELGSPEDRLQD) are compositionally biased toward basic and acidic residues. A phosphoserine mark is found at serine 931, serine 939, and serine 940. Positions 940–949 (SDPDTCSEEE) are enriched in acidic residues. Threonine 944 is subject to Phosphothreonine. 5 positions are modified to phosphoserine: serine 946, serine 951, serine 952, serine 955, and serine 959.

In terms of assembly, found in a complex composed at least of ARHGEF2, NOD2 and RIPK2. Interacts with RIPK2; the interaction mediates tyrosine phosphorylation of RIPK2 by Src kinase CSK. Interacts with RIPK1 and RIPK3. Interacts with YWHAZ/14-3-3 zeta; when phosphorylated at Ser-885. Interacts with the kinases PAK4, AURKA and MAPK1. Interacts with RHOA and RAC1. Interacts with NOD1. Interacts (via the N- terminal zinc finger) with CAPN6 (via domain II). Interacts with DYNLT1. Phosphorylation of Ser-885 by PAK1 induces binding to protein YWHAZ, promoting its relocation to microtubules and the inhibition of its activity. Phosphorylated by AURKA and CDK1 during mitosis, which negatively regulates its activity. Phosphorylation by MAPK1 or MAPK3 increases nucleotide exchange activity. Phosphorylation by PAK4 releases GEF-H1 from the microtubules. Phosphorylated on serine, threonine and tyrosine residues in a RIPK2-dependent manner.

Its subcellular location is the cytoplasm. It is found in the cytoskeleton. The protein localises to the cell junction. It localises to the tight junction. The protein resides in the golgi apparatus. Its subcellular location is the spindle. It is found in the cytoplasmic vesicle. Its function is as follows. Activates Rho-GTPases by promoting the exchange of GDP for GTP. May be involved in epithelial barrier permeability, cell motility and polarization, dendritic spine morphology, antigen presentation, leukemic cell differentiation, cell cycle regulation, innate immune response, and cancer. Binds Rac-GTPases, but does not seem to promote nucleotide exchange activity toward Rac-GTPases. May stimulate instead the cortical activity of Rac. Inactive toward CDC42, TC10, or Ras-GTPases. Forms an intracellular sensing system along with NOD1 for the detection of microbial effectors during cell invasion by pathogens. Involved in innate immune signaling transduction pathway promoting cytokine IL6/interleukin-6 and TNF-alpha secretion in macrophage upon stimulation by bacterial peptidoglycans; acts as a signaling intermediate between NOD2 receptor and RIPK2 kinase. Contributes to the tyrosine phosphorylation of RIPK2 through Src tyrosine kinase leading to NF-kappaB activation by NOD2. Overexpression activates Rho-, but not Rac-GTPases, and increases paracellular permeability. Involved in neuronal progenitor cell division and differentiation. Involved in the migration of precerebellar neurons. This chain is Rho guanine nucleotide exchange factor 2 (Arhgef2), found in Rattus norvegicus (Rat).